The primary structure comprises 185 residues: Ribosome-recycling factor (185 aa).

The protein belongs to the RRF family.

Its subcellular location is the cytoplasm. Functionally, responsible for the release of ribosomes from messenger RNA at the termination of protein biosynthesis. May increase the efficiency of translation by recycling ribosomes from one round of translation to another. The protein is Ribosome-recycling factor of Vibrio campbellii (strain ATCC BAA-1116).